Here is a 386-residue protein sequence, read N- to C-terminus: DNA replication and repair protein RecF (386 aa).

30-37 provides a ligand contact to ATP; the sequence is GSNGFGKT.

It belongs to the RecF family.

Its subcellular location is the cytoplasm. In terms of biological role, the RecF protein is involved in DNA metabolism; it is required for DNA replication and normal SOS inducibility. RecF binds preferentially to single-stranded, linear DNA. It also seems to bind ATP. This Mycolicibacterium vanbaalenii (strain DSM 7251 / JCM 13017 / BCRC 16820 / KCTC 9966 / NRRL B-24157 / PYR-1) (Mycobacterium vanbaalenii) protein is DNA replication and repair protein RecF.